The following is a 724-amino-acid chain: uncharacterized protein (724 aa).

Disordered stretches follow at residues 97–131 (RKSF…YPSP), 187–252 (ETKI…FETE), 309–434 (FETE…TSKL), and 454–473 (RGVE…VAEK). Polar residues predominate over residues 115-128 (TRSASYSESNNSFY). The stretch at 187-217 (ETKIGIEEENEESEILAEEKEEEDNDFSVLE) forms a coiled coil. The segment covering 193 to 212 (EEENEESEILAEEKEEEDND) has biased composition (acidic residues). 2 stretches are compositionally biased toward basic and acidic residues: residues 223-252 (QEIK…FETE) and 309-322 (FETE…DHSE). 2 stretches are compositionally biased toward low complexity: residues 323–333 (TTTSETDSTES) and 347–366 (SPQT…SLRS). The span at 367–388 (QPPPPPPSPEHKAPAPPPPPPM) shows a compositional bias: pro residues. Residues 400–410 (FSKTHSTNGDN) are compositionally biased toward polar residues. Coiled-coil stretches lie at residues 495–522 (SYFQ…HSFQ) and 649–678 (MELA…RAKR).

This is an uncharacterized protein from Arabidopsis thaliana (Mouse-ear cress).